Reading from the N-terminus, the 340-residue chain is Dihydroorotate dehydrogenase (quinone) (340 aa).

Residues 62–66 (AGMDK) and Thr86 contribute to the FMN site. Position 66 (Lys66) interacts with substrate. 111–115 (NRMGF) lines the substrate pocket. Residues Asn139 and Asn172 each coordinate FMN. Residue Asn172 coordinates substrate. Residue Ser175 is the Nucleophile of the active site. Substrate is bound at residue Asn177. Lys217 and Thr245 together coordinate FMN. 246–247 (NT) contributes to the substrate binding site. FMN-binding positions include Gly268, Gly297, and 318–319 (YS).

This sequence belongs to the dihydroorotate dehydrogenase family. Type 2 subfamily. As to quaternary structure, monomer. FMN is required as a cofactor.

Its subcellular location is the cell membrane. It carries out the reaction (S)-dihydroorotate + a quinone = orotate + a quinol. It functions in the pathway pyrimidine metabolism; UMP biosynthesis via de novo pathway; orotate from (S)-dihydroorotate (quinone route): step 1/1. Its function is as follows. Catalyzes the conversion of dihydroorotate to orotate with quinone as electron acceptor. This Shewanella woodyi (strain ATCC 51908 / MS32) protein is Dihydroorotate dehydrogenase (quinone).